The primary structure comprises 1684 residues: Protein Wiz (1684 aa).

A disordered region spans residues methionine 1–alanine 77. Over residues aspartate 13–isoleucine 24 the composition is skewed to basic and acidic residues. 5 consecutive C2H2-type zinc fingers follow at residues phenylalanine 308–histidine 330, leucine 345–histidine 367, asparagine 454–histidine 477, arginine 734–histidine 756, and methionine 802–histidine 824. Positions leucine 854–proline 876 are disordered. Residues threonine 903–histidine 925 form a C2H2-type 6 zinc finger. Residues lysine 916, lysine 972, lysine 988, lysine 1000, and lysine 1021 each participate in a glycyl lysine isopeptide (Lys-Gly) (interchain with G-Cter in SUMO2) cross-link. The segment at phenylalanine 1005–proline 1072 is disordered. Serine 1029 is modified (phosphoserine). A Phosphothreonine modification is found at threonine 1031. Glycyl lysine isopeptide (Lys-Gly) (interchain with G-Cter in SUMO2) cross-links involve residues lysine 1033 and lysine 1038. Residues serine 1039 and serine 1045 each carry the phosphoserine modification. A compositionally biased stretch (polar residues) spans proline 1040–glutamine 1057. Threonine 1049 carries the phosphothreonine modification. Residues serine 1050 and serine 1058 each carry the phosphoserine modification. Positions proline 1063–threonine 1067 are interaction with CTBP1 and CTBP2 1. The C2H2-type 7 zinc finger occupies isoleucine 1076–histidine 1098. A Glycyl lysine isopeptide (Lys-Gly) (interchain with G-Cter in SUMO2) cross-link involves residue lysine 1089. Serine 1112 and serine 1139 each carry phosphoserine. Residues serine 1127–lysine 1208 are disordered. Residues lysine 1141 and lysine 1145 each participate in a glycyl lysine isopeptide (Lys-Gly) (interchain with G-Cter in SUMO2) cross-link. A phosphoserine mark is found at serine 1155, serine 1160, and serine 1167. Glycyl lysine isopeptide (Lys-Gly) (interchain with G-Cter in SUMO2) cross-links involve residues lysine 1171 and lysine 1172. Phosphoserine is present on residues serine 1179 and serine 1184. Lysine 1195 bears the N6,N6,N6-trimethyllysine; by EHMT2; alternate mark. At lysine 1195 the chain carries N6,N6-dimethyllysine; by EHMT2; alternate. Residue lysine 1210 forms a Glycyl lysine isopeptide (Lys-Gly) (interchain with G-Cter in SUMO2) linkage. The interval proline 1247–serine 1251 is interaction with CTBP1 and CTBP2 2. The C2H2-type 8 zinc finger occupies isoleucine 1260 to histidine 1282. Lysine 1273 is covalently cross-linked (Glycyl lysine isopeptide (Lys-Gly) (interchain with G-Cter in SUMO2)). The residue at position 1296 (serine 1296) is a Phosphoserine. Lysine 1315 is covalently cross-linked (Glycyl lysine isopeptide (Lys-Gly) (interchain with G-Cter in SUMO2)). The segment at alanine 1320–glycine 1384 is disordered. Residues alanine 1335–serine 1351 are compositionally biased toward low complexity. Phosphoserine is present on residues serine 1342 and serine 1347. Residues lysine 1376, lysine 1389, lysine 1403, lysine 1405, and lysine 1415 each participate in a glycyl lysine isopeptide (Lys-Gly) (interchain with G-Cter in SUMO2) cross-link. The C2H2-type 9 zinc-finger motif lies at alanine 1430–histidine 1452. Residues lysine 1481, lysine 1497, and lysine 1510 each participate in a glycyl lysine isopeptide (Lys-Gly) (interchain with G-Cter in SUMO2) cross-link. 2 disordered regions span residues threonine 1496–valine 1587 and glutamine 1592–valine 1611. Serine 1550 carries the phosphoserine modification. Lysine 1556 participates in a covalent cross-link: Glycyl lysine isopeptide (Lys-Gly) (interchain with G-Cter in SUMO1); alternate. Lysine 1556 participates in a covalent cross-link: Glycyl lysine isopeptide (Lys-Gly) (interchain with G-Cter in SUMO2); alternate. A compositionally biased stretch (basic and acidic residues) spans lysine 1556–arginine 1574. Glycyl lysine isopeptide (Lys-Gly) (interchain with G-Cter in SUMO2) cross-links involve residues lysine 1567 and lysine 1593. The segment covering glutamine 1599–valine 1611 has biased composition (pro residues). The C2H2-type 10 zinc finger occupies leucine 1629 to histidine 1655. The interval serine 1662–proline 1684 is disordered. Lysine 1663 is covalently cross-linked (Glycyl lysine isopeptide (Lys-Gly) (interchain with G-Cter in SUMO2)). Residues glutamine 1672–proline 1684 show a composition bias toward low complexity.

This sequence belongs to the krueppel C2H2-type zinc-finger protein family. Part of a complex containing at least CDYL, REST, WIZ, SETB1, EHMT1 and EHMT2. Interacts with EHMT1, EHMT2, CTBP1 and CTBP2. As to expression, according to PubMed:9795207, isoform L and isoform S are brain-specific. According to PubMed:16702210, isoform S is ubiquitously expressed.

It localises to the nucleus. May link EHMT1 and EHMT2 histone methyltransferases to the CTBP corepressor machinery. May be involved in EHMT1-EHMT2 heterodimer formation and stabilization. The polypeptide is Protein Wiz (Wiz) (Mus musculus (Mouse)).